Reading from the N-terminus, the 200-residue chain is Small ribosomal subunit protein eS8A (200 aa).

Disordered stretches follow at residues 1-40 (MGIT…RIGP) and 123-145 (SKGK…KHSA). Positions 135–145 (KSKHVQRKHSA) are enriched in basic residues.

It belongs to the eukaryotic ribosomal protein eS8 family. As to quaternary structure, component of the small ribosomal subunit (SSU). Mature yeast ribosomes consist of a small (40S) and a large (60S) subunit. The 40S small subunit contains 1 molecule of ribosomal RNA (18S rRNA) and at least 33 different proteins. The large 60S subunit contains 3 rRNA molecules (25S, 5.8S and 5S rRNA) and at least 46 different proteins.

The protein localises to the cytoplasm. In terms of biological role, component of the ribosome, a large ribonucleoprotein complex responsible for the synthesis of proteins in the cell. The small ribosomal subunit (SSU) binds messenger RNAs (mRNAs) and translates the encoded message by selecting cognate aminoacyl-transfer RNA (tRNA) molecules. The large subunit (LSU) contains the ribosomal catalytic site termed the peptidyl transferase center (PTC), which catalyzes the formation of peptide bonds, thereby polymerizing the amino acids delivered by tRNAs into a polypeptide chain. The nascent polypeptides leave the ribosome through a tunnel in the LSU and interact with protein factors that function in enzymatic processing, targeting, and the membrane insertion of nascent chains at the exit of the ribosomal tunnel. This chain is Small ribosomal subunit protein eS8A (rps801), found in Schizosaccharomyces pombe (strain 972 / ATCC 24843) (Fission yeast).